Here is a 334-residue protein sequence, read N- to C-terminus: MTGSLFKGNFWSTDILSTIGYDSIIQHLNNGRKNCKEFEDFLKERASIEEKYGKDLLNLSRKKPCGQSEINTLKRALEVFKQQVDNVAQCHIQLAQTLREEARKMEEFREKQKLQRKKTETIMDAAHKQRNAQFKKAMDAKKNYEQKCRDKDEAEQAVHRSANVANQRQQEKLFVKLATSKTAVEDSDKAYMLHINMLEKVREDWQSEHIKACEVFEAQECERINFFRNALWLHLNQLSQQCVANDEMYEQVRKSLETCSIEKDIQYFVNQRKTGQTPPAPIMYENFYSPQRNAAPPGKTTGPNPARRGPLPVPKRIPDDPDYSVVEDYSLLYQ.

Residues 4-264 (SLFKGNFWST…SLETCSIEKD (261 aa)) form the F-BAR domain. The stretch at 66–163 (GQSEINTLKR…AEQAVHRSAN (98 aa)) forms a coiled coil. Positions 288 to 322 (YSPQRNAAPPGKTTGPNPARRGPLPVPKRIPDDPD) are disordered. Phosphotyrosine occurs at positions 323 and 329.

Post-translationally, phosphorylated on tyrosine. In terms of tissue distribution, expressed in macrophage-containing tissues, including bone marrow, spleen, liver, kidney, intestine and brain.

The protein resides in the cytoplasm. It is found in the membrane. Its function is as follows. Binds to F-actin. May be involved in regulation of the actin cytoskeleton. The sequence is that of Proline-serine-threonine phosphatase-interacting protein 2 (Pstpip2) from Mus musculus (Mouse).